A 255-amino-acid chain; its full sequence is Fumarate reductase cytochrome b subunit (255 aa).

5 consecutive transmembrane segments (helical) span residues 33–53 (TGLI…SILI), 78–98 (IVSV…FLAL), 126–146 (WFIQ…HLFV), 168–188 (FWLL…IGLY), and 208–228 (IKWA…GAYI). Heme b is bound by residues H44, H93, H143, and H182.

Belongs to the diheme cytochrome b FrdC family. As to quaternary structure, part of an enzyme complex containing three subunits: a flavoprotein (frdA), an iron-sulfur protein (frdB), and diheme cytochrome b (frdC). Heme b serves as cofactor.

The protein resides in the cell inner membrane. The fumarate reductase enzyme complex is required for fumarate respiration. This subunit anchors the complex in the membrane and binds a diheme cytochrome b. This chain is Fumarate reductase cytochrome b subunit (frdC), found in Helicobacter pylori (strain J99 / ATCC 700824) (Campylobacter pylori J99).